A 372-amino-acid polypeptide reads, in one-letter code: Peptidyl-prolyl cis-trans isomerase D (372 aa).

One can recognise a PPIase cyclophilin-type domain in the interval 9–175 (FFDISIGGKP…KEVKIEDCGV (167 aa)). TPR repeat units follow at residues 220 to 253 (VEAV…LKQY), 271 to 304 (VSLF…DNTD), and 309 to 342 (AKAL…QPHD).

Belongs to the cyclophilin-type PPIase family. PPIase D subfamily.

The protein resides in the cytoplasm. It catalyses the reaction [protein]-peptidylproline (omega=180) = [protein]-peptidylproline (omega=0). PPIases accelerate the folding of proteins. It catalyzes the cis-trans isomerization of proline imidic peptide bonds in oligopeptides. This is Peptidyl-prolyl cis-trans isomerase D (CPR6) from Kluyveromyces lactis (strain ATCC 8585 / CBS 2359 / DSM 70799 / NBRC 1267 / NRRL Y-1140 / WM37) (Yeast).